The primary structure comprises 301 residues: uncharacterized protein (301 aa).

Residues 1–28 (MFFREDKSVAFRLRSAALSGCATGQSDA) form the signal peptide.

This is an uncharacterized protein from Treponema pallidum (strain Nichols).